Reading from the N-terminus, the 411-residue chain is MNSKQRVYAFFWIFGLVNNVLYVVILSAAVDIVGPKVPKTLVLLMDITPSLLIKVTAPFFIKSIPYTMRIYALIALSCIGMIFVSGKSLLLCMIGIAMASVSSGFGEVSFLQLSHFFEENALNGWSSGTGGAGIVGSSVYMLLTSIFKLPIRLSLLSFTILPFAFLLYFKLDTTQIEYDSISSSGEETLIRNSNSNALQTDTFNESIRLSKTEEQNIFVSSIDHFKSTCVNLKALVVPYMLPLSSVYLFEYLINQAVSPTLLFPLDSRGLPPFFNKYRDMYVTYGTLYQLGVFISRSLAHKFRMHNLYFLSALQGLNLVLTILQAWIYIVHTPWPIMILIFYEGLLGGSSYVNTFLNVLEEVDMDKREFSLGAVSIADSLGVFIAALVGLGLEPTICNHQVSTGRPWCRME.

A signal peptide spans 1–29 (MNSKQRVYAFFWIFGLVNNVLYVVILSAA). Helical transmembrane passes span 41–61 (LVLLMDITPSLLIKVTAPFFI), 79–99 (IGMIFVSGKSLLLCMIGIAMA), 127–147 (SGTGGAGIVGSSVYMLLTSIF), 149–169 (LPIRLSLLSFTILPFAFLLYF), 281–300 (YVTYGTLYQLGVFISRSLAH), 307–329 (LYFLSALQGLNLVLTILQAWIYI), 334–356 (WPIMILIFYEGLLGGSSYVNTFL), and 371–391 (LGAVSIADSLGVFIAALVGLG).

The protein belongs to the battenin family.

The protein resides in the vacuole membrane. Functionally, involved in vacuolar transport and vacuole pH homeostasis. Also required for cytokinesis. This Candida glabrata (strain ATCC 2001 / BCRC 20586 / JCM 3761 / NBRC 0622 / NRRL Y-65 / CBS 138) (Yeast) protein is Protein BTN1 (BTN1).